The sequence spans 101 residues: AFA-III adhesin operon regulatory protein (101 aa).

Functionally, regulates the transcription of genes involved in the biosynthesis of afimbrial adhesin-III. The chain is AFA-III adhesin operon regulatory protein (afaA) from Escherichia coli.